Reading from the N-terminus, the 72-residue chain is Sec-independent protein translocase protein TatA (72 aa).

The helical transmembrane segment at 1 to 21 (MLGGISIWQLLIVLAILVLIF) threads the bilayer.

The protein belongs to the TatA/E family. As to quaternary structure, the Tat system comprises two distinct complexes: a TatABC complex, containing multiple copies of TatA, TatB and TatC subunits, and a separate TatA complex, containing only TatA subunits. Substrates initially bind to the TatABC complex, which probably triggers association of the separate TatA complex to form the active translocon.

It localises to the cell inner membrane. Functionally, part of the twin-arginine translocation (Tat) system that transports large folded proteins containing a characteristic twin-arginine motif in their signal peptide across membranes. TatA could form the protein-conducting channel of the Tat system. In Marinomonas sp. (strain MWYL1), this protein is Sec-independent protein translocase protein TatA.